Consider the following 250-residue polypeptide: MNLKITINQQASISDSLIIANLNLIQFFRDNTFNKIECDQLLTLKDAVQISQILKDQGVLIYEGEINESVITYFQASGLYNQGQGKFIKQVLQIKKLNIPQQEFNNCYGKYDYIEQKFQNQINFFKQVDINGKQEIIDENELLDDGVQVKQVESCASKPRACANCTCGRKEMEEKQDKEQLLEQLKNNSIKGCGSCYLGDAFRCANCPYRGLPAFKDGEQVKVLQDDVFLQEQEEKDQVKLENGKVKLKI.

An N-terminal SAM-like domain region spans residues 1–104 (MNLKITINQQ…KKLNIPQQEF (104 aa)). Residues 104-149 (FNNCYGKYDYIEQKFQNQINFFKQVDINGKQEIIDENELLDDGVQV) are linker. Residues C155, C162, C165, and C167 each contribute to the [2Fe-2S] cluster site. A fe-S binding site A region spans residues 155-167 (CASKPRACANCTC). [4Fe-4S] cluster contacts are provided by C193, C196, C204, and C207. 2 short sequence motifs (cx2C motif) span residues 193–196 (CGSC) and 204–207 (CANC). Residues 193–207 (CGSCYLGDAFRCANC) are fe-S binding site B.

It belongs to the anamorsin family. Monomer. [2Fe-2S] cluster is required as a cofactor. It depends on [4Fe-4S] cluster as a cofactor.

The protein resides in the cytoplasm. The protein localises to the mitochondrion intermembrane space. Component of the cytosolic iron-sulfur (Fe-S) protein assembly (CIA) machinery. Required for the maturation of extramitochondrial Fe-S proteins. Part of an electron transfer chain functioning in an early step of cytosolic Fe-S biogenesis, facilitating the de novo assembly of a [4Fe-4S] cluster on the cytosolic Fe-S scaffold complex. Electrons are transferred from NADPH via a FAD- and FMN-containing diflavin oxidoreductase. Together with the diflavin oxidoreductase, also required for the assembly of the diferric tyrosyl radical cofactor of ribonucleotide reductase (RNR), probably by providing electrons for reduction during radical cofactor maturation in the catalytic small subunit. The polypeptide is Anamorsin homolog 1 (Paramecium tetraurelia).